A 73-amino-acid polypeptide reads, in one-letter code: Large ribosomal subunit protein bL31 (73 aa).

Residues C16, C18, C38, and C41 each coordinate Zn(2+).

The protein belongs to the bacterial ribosomal protein bL31 family. Type A subfamily. As to quaternary structure, part of the 50S ribosomal subunit. It depends on Zn(2+) as a cofactor.

Functionally, binds the 23S rRNA. The chain is Large ribosomal subunit protein bL31 from Vibrio vulnificus (strain CMCP6).